Here is a 193-residue protein sequence, read N- to C-terminus: Interleukin-23 subunit alpha (193 aa).

An N-terminal signal peptide occupies residues 1-22; that stretch reads MLGSRAVMLMLLLLLLPWTSQG.

This sequence belongs to the IL-6 superfamily. Heterodimer with IL12B; disulfide-linked. The heterodimer is known as interleukin IL-23. Interacts with IL23R; this interaction enables recruitment of IL12RB1.

It is found in the secreted. Its function is as follows. Associates with IL12B to form the pro-inflammatory cytokine IL-23 that plays different roles in innate and adaptive immunity. Released by antigen-presenting cells such as dendritic cells or macrophages, binds to a heterodimeric receptor complex composed of IL12RB1 and IL23R to activate JAK2 and TYK2 which then phosphorylate the receptor to form a docking site leading to the phosphorylation of STAT3 and STAT4. This process leads to activation of several pathways including p38 MAPK or NF-kappa-B and promotes the production of pro-inflammatory cytokines such as interleukin-17A/IL17A. In turn, participates in the early and effective intracellular bacterial clearance. Promotes the expansion and survival of T-helper 17 cells, a CD4-positive helper T-cell subset that produces IL-17, as well as other IL-17-producing cells. The chain is Interleukin-23 subunit alpha (IL23A) from Sus scrofa (Pig).